Consider the following 379-residue polypeptide: Homoserine O-acetyltransferase (379 aa).

One can recognise an AB hydrolase-1 domain in the interval 52–356; the sequence is NVVVVLHALT…VYGHDGFLVE (305 aa). The active-site Nucleophile is the serine 157. A substrate-binding site is contributed by arginine 227. Catalysis depends on residues aspartate 320 and histidine 350. Aspartate 351 lines the substrate pocket.

This sequence belongs to the AB hydrolase superfamily. MetX family. As to quaternary structure, homodimer.

The protein localises to the cytoplasm. The catalysed reaction is L-homoserine + acetyl-CoA = O-acetyl-L-homoserine + CoA. The protein operates within amino-acid biosynthesis; L-methionine biosynthesis via de novo pathway; O-acetyl-L-homoserine from L-homoserine: step 1/1. In terms of biological role, transfers an acetyl group from acetyl-CoA to L-homoserine, forming acetyl-L-homoserine. The polypeptide is Homoserine O-acetyltransferase (Mycobacterium bovis (strain ATCC BAA-935 / AF2122/97)).